The following is a 28-amino-acid chain: Conotoxin Cl1.2 (28 aa).

In terms of processing, contains 2 disulfide bonds. In terms of tissue distribution, expressed by the venom duct.

The protein resides in the secreted. This Californiconus californicus (California cone) protein is Conotoxin Cl1.2.